Here is a 495-residue protein sequence, read N- to C-terminus: NADH-ubiquinone oxidoreductase chain 4 (495 aa).

Transmembrane regions (helical) follow at residues 9–29 (YFDL…LLFI), 39–59 (LIGL…WIQF), 89–109 (LSLF…LVGW), 118–138 (EYII…CMLD), 139–159 (LLLF…IIGV), 173–193 (FFLY…LILL), 214–234 (ILLW…VPVH), 245–265 (PTAG…YGFL), 272–292 (FPEA…IAII), 313–333 (VAHM…GIGG), 335–355 (ILLM…VGVL), 367–387 (YGGL…FTLA), 388–408 (NMSL…VGAF), 413–433 (LVAT…LWLY), and 457–477 (VFIF…PKVF).

It belongs to the complex I subunit 4 family.

Its subcellular location is the mitochondrion membrane. It catalyses the reaction a ubiquinone + NADH + 5 H(+)(in) = a ubiquinol + NAD(+) + 4 H(+)(out). Functionally, core subunit of the mitochondrial membrane respiratory chain NADH dehydrogenase (Complex I) that is believed to belong to the minimal assembly required for catalysis. Complex I functions in the transfer of electrons from NADH to the respiratory chain. The immediate electron acceptor for the enzyme is believed to be ubiquinone. The sequence is that of NADH-ubiquinone oxidoreductase chain 4 (ND4) from Triticum aestivum (Wheat).